The sequence spans 403 residues: Phosphopentomutase (403 aa).

Mn(2+)-binding residues include Asp-13, Asp-298, His-303, Asp-339, His-340, and His-351.

It belongs to the phosphopentomutase family. Mn(2+) serves as cofactor.

The protein resides in the cytoplasm. The catalysed reaction is 2-deoxy-alpha-D-ribose 1-phosphate = 2-deoxy-D-ribose 5-phosphate. It catalyses the reaction alpha-D-ribose 1-phosphate = D-ribose 5-phosphate. Its pathway is carbohydrate degradation; 2-deoxy-D-ribose 1-phosphate degradation; D-glyceraldehyde 3-phosphate and acetaldehyde from 2-deoxy-alpha-D-ribose 1-phosphate: step 1/2. Isomerase that catalyzes the conversion of deoxy-ribose 1-phosphate (dRib-1-P) and ribose 1-phosphate (Rib-1-P) to deoxy-ribose 5-phosphate (dRib-5-P) and ribose 5-phosphate (Rib-5-P), respectively. In Streptococcus equi subsp. zooepidemicus (strain MGCS10565), this protein is Phosphopentomutase.